A 238-amino-acid polypeptide reads, in one-letter code: uncharacterized protein (238 aa).

Transmembrane regions (helical) follow at residues Phe15–Pro37, Ala50–Leu69, Leu79–Ile96, Ile101–Leu118, Ile128–Leu150, Cys163–Gly183, and Phe203–Phe225.

The protein localises to the cell membrane. This is an uncharacterized protein from Treponema pallidum (strain Nichols).